Consider the following 213-residue polypeptide: Orotate phosphoribosyltransferase (213 aa).

Lysine 26 is a 5-phospho-alpha-D-ribose 1-diphosphate binding site. 34–35 (FF) serves as a coordination point for orotate. Residues 72–73 (YK), arginine 98, lysine 99, lysine 102, histidine 104, and 123–131 (DDVISAGTS) contribute to the 5-phospho-alpha-D-ribose 1-diphosphate site. 2 residues coordinate orotate: serine 127 and arginine 155.

Belongs to the purine/pyrimidine phosphoribosyltransferase family. PyrE subfamily. In terms of assembly, homodimer. Mg(2+) serves as cofactor.

It catalyses the reaction orotidine 5'-phosphate + diphosphate = orotate + 5-phospho-alpha-D-ribose 1-diphosphate. The protein operates within pyrimidine metabolism; UMP biosynthesis via de novo pathway; UMP from orotate: step 1/2. Its function is as follows. Catalyzes the transfer of a ribosyl phosphate group from 5-phosphoribose 1-diphosphate to orotate, leading to the formation of orotidine monophosphate (OMP). This Neisseria meningitidis serogroup C (strain 053442) protein is Orotate phosphoribosyltransferase.